Here is an 84-residue protein sequence, read N- to C-terminus: Large ribosomal subunit protein bL31B (84 aa).

This sequence belongs to the bacterial ribosomal protein bL31 family. Type B subfamily. In terms of assembly, part of the 50S ribosomal subunit.

This chain is Large ribosomal subunit protein bL31B, found in Photorhabdus laumondii subsp. laumondii (strain DSM 15139 / CIP 105565 / TT01) (Photorhabdus luminescens subsp. laumondii).